Consider the following 428-residue polypeptide: uncharacterized protein (428 aa).

The segment at 1-49 (MRTQTFPPSSSSSRTTHPKKNRHSSNSSSMALVTPAKSSTGAAPKQSSQ) is disordered. Residues 24–49 (SSNSSSMALVTPAKSSTGAAPKQSSQ) show a composition bias toward polar residues.

This is an uncharacterized protein from Caenorhabditis elegans.